Reading from the N-terminus, the 158-residue chain is NAD(P)H-quinone oxidoreductase subunit J, chloroplastic (158 aa).

Belongs to the complex I 30 kDa subunit family. NDH is composed of at least 16 different subunits, 5 of which are encoded in the nucleus.

The protein localises to the plastid. It is found in the chloroplast thylakoid membrane. It carries out the reaction a plastoquinone + NADH + (n+1) H(+)(in) = a plastoquinol + NAD(+) + n H(+)(out). The catalysed reaction is a plastoquinone + NADPH + (n+1) H(+)(in) = a plastoquinol + NADP(+) + n H(+)(out). In terms of biological role, NDH shuttles electrons from NAD(P)H:plastoquinone, via FMN and iron-sulfur (Fe-S) centers, to quinones in the photosynthetic chain and possibly in a chloroplast respiratory chain. The immediate electron acceptor for the enzyme in this species is believed to be plastoquinone. Couples the redox reaction to proton translocation, and thus conserves the redox energy in a proton gradient. This Trachelium caeruleum (Blue throatwort) protein is NAD(P)H-quinone oxidoreductase subunit J, chloroplastic.